Reading from the N-terminus, the 483-residue chain is 23S rRNA (uracil(1939)-C(5))-methyltransferase RlmD (483 aa).

A compositionally biased stretch (basic residues) spans 1–11 (MTGLGKRRPAR). The interval 1–36 (MTGLGKRRPARSRSGVSGLRERRQPASVERSAGSEG) is disordered. Positions 29-90 (ERSAGSEGRR…KRFDEAHVSE (62 aa)) constitute a TRAM domain. Residues C103, C109, C112, and C189 each contribute to the [4Fe-4S] cluster site. Q298, F332, N337, E353, D379, and D401 together coordinate S-adenosyl-L-methionine. Catalysis depends on C427, which acts as the Nucleophile.

The protein belongs to the class I-like SAM-binding methyltransferase superfamily. RNA M5U methyltransferase family. RlmD subfamily.

It catalyses the reaction uridine(1939) in 23S rRNA + S-adenosyl-L-methionine = 5-methyluridine(1939) in 23S rRNA + S-adenosyl-L-homocysteine + H(+). Its function is as follows. Catalyzes the formation of 5-methyl-uridine at position 1939 (m5U1939) in 23S rRNA. This Halomonas elongata (strain ATCC 33173 / DSM 2581 / NBRC 15536 / NCIMB 2198 / 1H9) protein is 23S rRNA (uracil(1939)-C(5))-methyltransferase RlmD.